Here is a 234-residue protein sequence, read N- to C-terminus: Proteasome subunit alpha (234 aa).

The protein belongs to the peptidase T1A family. As to quaternary structure, the 20S proteasome core is composed of 14 alpha and 14 beta subunits that assemble into four stacked heptameric rings, resulting in a barrel-shaped structure. The two inner rings, each composed of seven catalytic beta subunits, are sandwiched by two outer rings, each composed of seven alpha subunits. The catalytic chamber with the active sites is on the inside of the barrel. Has a gated structure, the ends of the cylinder being occluded by the N-termini of the alpha-subunits. Is capped at one or both ends by the proteasome regulatory ATPase, PAN.

Its subcellular location is the cytoplasm. Its activity is regulated as follows. The formation of the proteasomal ATPase PAN-20S proteasome complex, via the docking of the C-termini of PAN into the intersubunit pockets in the alpha-rings, triggers opening of the gate for substrate entry. Interconversion between the open-gate and close-gate conformations leads to a dynamic regulation of the 20S proteasome proteolysis activity. In terms of biological role, component of the proteasome core, a large protease complex with broad specificity involved in protein degradation. This chain is Proteasome subunit alpha, found in Picrophilus torridus (strain ATCC 700027 / DSM 9790 / JCM 10055 / NBRC 100828 / KAW 2/3).